The primary structure comprises 134 residues: MKNMGDGRRIARVEREIQATIAQFLIRGFKTPLPGLVTVASVKMPADLRAAKVYVSILGDEKQQDEALDLLQERAFEIQNYIGKELKMRYCPKLTFYLDHATEQVLKVEKILHELELERKANNPGEGSDESDDE.

It belongs to the RbfA family. In terms of assembly, monomer. Binds 30S ribosomal subunits, but not 50S ribosomal subunits or 70S ribosomes.

It is found in the cytoplasm. In terms of biological role, one of several proteins that assist in the late maturation steps of the functional core of the 30S ribosomal subunit. Associates with free 30S ribosomal subunits (but not with 30S subunits that are part of 70S ribosomes or polysomes). Required for efficient processing of 16S rRNA. May interact with the 5'-terminal helix region of 16S rRNA. This chain is Ribosome-binding factor A, found in Bdellovibrio bacteriovorus (strain ATCC 15356 / DSM 50701 / NCIMB 9529 / HD100).